We begin with the raw amino-acid sequence, 59 residues long: Small, acid-soluble spore protein H (59 aa).

It belongs to the SspH family.

The protein localises to the spore core. The chain is Small, acid-soluble spore protein H from Alkaliphilus metalliredigens (strain QYMF).